Consider the following 420-residue polypeptide: 3-phosphoshikimate 1-carboxyvinyltransferase (420 aa).

Positions 20, 21, and 25 each coordinate 3-phosphoshikimate. Phosphoenolpyruvate is bound at residue lysine 20. Arginine 119 is a phosphoenolpyruvate binding site. 3-phosphoshikimate contacts are provided by serine 161, serine 162, glutamine 163, serine 189, aspartate 303, glutamine 326, and lysine 330. Glutamine 163 provides a ligand contact to phosphoenolpyruvate. Residue aspartate 303 is the Proton acceptor of the active site. 3 residues coordinate phosphoenolpyruvate: arginine 334, arginine 375, and lysine 400.

Belongs to the EPSP synthase family. As to quaternary structure, monomer.

The protein resides in the cytoplasm. The catalysed reaction is 3-phosphoshikimate + phosphoenolpyruvate = 5-O-(1-carboxyvinyl)-3-phosphoshikimate + phosphate. The protein operates within metabolic intermediate biosynthesis; chorismate biosynthesis; chorismate from D-erythrose 4-phosphate and phosphoenolpyruvate: step 6/7. In terms of biological role, catalyzes the transfer of the enolpyruvyl moiety of phosphoenolpyruvate (PEP) to the 5-hydroxyl of shikimate-3-phosphate (S3P) to produce enolpyruvyl shikimate-3-phosphate and inorganic phosphate. The polypeptide is 3-phosphoshikimate 1-carboxyvinyltransferase (Dehalococcoides mccartyi (strain ATCC BAA-2266 / KCTC 15142 / 195) (Dehalococcoides ethenogenes (strain 195))).